The sequence spans 711 residues: Hepatocyte growth factor-like protein (711 aa).

Residues 1–18 form the signal peptide; sequence MGWLPLLLLLTQCLGVPG. The PAN domain maps to 21-105; sequence SPLNDFQVLR…GRCDLFQKKD (85 aa). 20 disulfide bridges follow: C56/C78, C60/C66, C110/C186, C131/C169, C157/C181, C191/C268, C194/C324, C212/C251, C240/C263, C283/C361, C304/C343, C332/C355, C370/C448, C391/C431, C419/C443, C468/C588, C507/C523, C602/C667, C632/C646, and C657/C685. N72 carries an N-linked (GlcNAc...) asparagine glycan. Kringle domains lie at 110–186, 191–268, 283–361, and 370–448; these read CIMN…IKSC, CVWC…LPRC, CFRG…IRRC, and CYHG…LRRC. N296 carries an N-linked (GlcNAc...) asparagine glycan. In terms of domain architecture, Peptidase S1 spans 484–709; it reads VVGGHPGNSP…FVDWIHKVMR (226 aa). N615 carries N-linked (GlcNAc...) asparagine glycosylation.

The protein belongs to the peptidase S1 family. Plasminogen subfamily. Dimer of an alpha chain and a beta chain linked by a disulfide bond. Interacts (via beta chain) with MST1R (via SEMA domain). In terms of processing, cleaved after Arg-483, probably by HPN/Hepsin, to yield the active form consisting of two disulfide-linked chains.

The protein localises to the secreted. In Homo sapiens (Human), this protein is Hepatocyte growth factor-like protein (MST1).